An 887-amino-acid polypeptide reads, in one-letter code: Phosphatidylinositol 3-kinase catalytic subunit type 3 (887 aa).

Positions Tyr35–Gln184 constitute a C2 PI3K-type domain. The tract at residues Val149–Asp170 is disordered. Polar residues predominate over residues Pro156–Asp170. At Thr163 the chain carries Phosphothreonine; by AMPK. Residue Ser165 is modified to Phosphoserine; by AMPK. Residues Ser244, Ser261, and Ser282 each carry the phosphoserine modification. Residues Asp283–Val520 form the PIK helical domain. The tract at residues Leu415 to Ser466 is disordered. Over residues Ser425 to Ser437 the composition is skewed to low complexity. Positions Pro449–Ala459 are enriched in pro residues. In terms of domain architecture, PI3K/PI4K catalytic spans Ile605–Phe871. The G-loop stretch occupies residues Leu611–Met617. Positions Gly740–Asn748 are catalytic loop. An activation loop region spans residues His759–Asn780.

It belongs to the PI3/PI4-kinase family. As to quaternary structure, component of the PI3K (PI3KC3/PI3K-III/class III phosphatidylinositol 3-kinase) complex the core of which is composed of the catalytic subunit PIK3C3, the regulatory subunit PIK3R4 and BECN1 associating with additional regulatory/auxiliary subunits to form alternative complex forms. Alternative complex forms containing a fourth regulatory subunit in a mutually exclusive manner are: the PI3K complex I (PI3KC3-C1) containing ATG14, and the PI3K complex II (PI3KC3-C2) containing UVRAG. PI3KC3-C1 displays a V-shaped architecture with PIK3R4 serving as a bridge between PIK3C3 and the ATG14:BECN1 subcomplex. Both, PI3KC3-C1 and PI3KC3-C2, can associate with further regulatory subunits such as RUBCN, SH3GLB1/Bif-1 and AMBRA1. PI3KC3-C1 probably associates with PIK3CB. Interacts with RAB7A in the presence of PIK3R4. Interacts with AMBRA1. Interacts with BECN1P1/BECN2. Interacts with SLAMF1. May be a component of a complex composed of RAB5A (in GDP-bound form), DYN2 and PIK3C3. Interacts with NCKAP1L. Interacts with ATG14; this interaction is increased in the absence of TMEM39A. Interacts with STEEP1; the interaction is STING1-dependent and required for trafficking of STING1 from the endoplasmic reticulum. Interacts with YWHAG. Interacts with ARMC3. Mn(2+) is required as a cofactor. In terms of processing, ubiquitinated via 'Lys-29'- and 'Lys-48'-linked ubiquitination by UBE3C, promoting its degradation. Deubiquitination by ZRANB1/TRABID promotes its stabilization, leading to autophagosome maturation.

It is found in the midbody. It localises to the late endosome. Its subcellular location is the cytoplasmic vesicle. The protein localises to the autophagosome. It carries out the reaction a 1,2-diacyl-sn-glycero-3-phospho-(1D-myo-inositol) + ATP = a 1,2-diacyl-sn-glycero-3-phospho-(1D-myo-inositol-3-phosphate) + ADP + H(+). Functionally, catalytic subunit of the PI3K complex that mediates formation of phosphatidylinositol 3-phosphate; different complex forms are believed to play a role in multiple membrane trafficking pathways: PI3KC3-C1 is involved in initiation of autophagosomes and PI3KC3-C2 in maturation of autophagosomes and endocytosis. As part of PI3KC3-C1, promotes endoplasmic reticulum membrane curvature formation prior to vesicle budding. Involved in regulation of degradative endocytic trafficking and required for the abscission step in cytokinesis, probably in the context of PI3KC3-C2. Involved in the transport of lysosomal enzyme precursors to lysosomes. Required for transport from early to late endosomes. The protein is Phosphatidylinositol 3-kinase catalytic subunit type 3 of Mus musculus (Mouse).